A 569-amino-acid chain; its full sequence is 2-succinyl-5-enolpyruvyl-6-hydroxy-3-cyclohexene-1-carboxylate synthase (569 aa).

This sequence belongs to the TPP enzyme family. MenD subfamily. In terms of assembly, homodimer. Mg(2+) serves as cofactor. Requires Mn(2+) as cofactor. Thiamine diphosphate is required as a cofactor.

The enzyme catalyses isochorismate + 2-oxoglutarate + H(+) = 5-enolpyruvoyl-6-hydroxy-2-succinyl-cyclohex-3-ene-1-carboxylate + CO2. It participates in quinol/quinone metabolism; 1,4-dihydroxy-2-naphthoate biosynthesis; 1,4-dihydroxy-2-naphthoate from chorismate: step 2/7. The protein operates within quinol/quinone metabolism; menaquinone biosynthesis. Functionally, catalyzes the thiamine diphosphate-dependent decarboxylation of 2-oxoglutarate and the subsequent addition of the resulting succinic semialdehyde-thiamine pyrophosphate anion to isochorismate to yield 2-succinyl-5-enolpyruvyl-6-hydroxy-3-cyclohexene-1-carboxylate (SEPHCHC). The sequence is that of 2-succinyl-5-enolpyruvyl-6-hydroxy-3-cyclohexene-1-carboxylate synthase from Shewanella halifaxensis (strain HAW-EB4).